A 317-amino-acid polypeptide reads, in one-letter code: Protein-methionine-sulfoxide reductase catalytic subunit MsrP (317 aa).

The tat-type signal signal peptide spans 1–40; sequence MNKFTKTDVTPEKLFIQRRKIIQGMSVLSAAAAFPNLAAA. Mo-molybdopterin contacts are provided by residues Asn72, 75-76, Cys129, Thr164, Asn216, Arg221, and 232-234; these read YE and SIK.

This sequence belongs to the MsrP family. Heterodimer of a catalytic subunit (MsrP) and a heme-binding subunit (MsrQ). The cofactor is Mo-molybdopterin. Post-translationally, predicted to be exported by the Tat system. The position of the signal peptide cleavage has not been experimentally proven.

Its subcellular location is the periplasm. It carries out the reaction L-methionyl-[protein] + a quinone + H2O = L-methionyl-(S)-S-oxide-[protein] + a quinol. The catalysed reaction is L-methionyl-[protein] + a quinone + H2O = L-methionyl-(R)-S-oxide-[protein] + a quinol. Functionally, part of the MsrPQ system that repairs oxidized periplasmic proteins containing methionine sulfoxide residues (Met-O), using respiratory chain electrons. Thus protects these proteins from oxidative-stress damage caused by reactive species of oxygen and chlorine generated by the host defense mechanisms. MsrPQ is essential for the maintenance of envelope integrity under bleach stress, rescuing a wide series of structurally unrelated periplasmic proteins from methionine oxidation. The catalytic subunit MsrP is non-stereospecific, being able to reduce both (R-) and (S-) diastereoisomers of methionine sulfoxide. The sequence is that of Protein-methionine-sulfoxide reductase catalytic subunit MsrP from Actinobacillus succinogenes (strain ATCC 55618 / DSM 22257 / CCUG 43843 / 130Z).